Reading from the N-terminus, the 218-residue chain is Ribosomal RNA small subunit methyltransferase G (218 aa).

S-adenosyl-L-methionine is bound by residues Gly82, Leu87, Val133–Glu134, and Arg147.

Belongs to the methyltransferase superfamily. RNA methyltransferase RsmG family.

It localises to the cytoplasm. It catalyses the reaction guanosine(527) in 16S rRNA + S-adenosyl-L-methionine = N(7)-methylguanosine(527) in 16S rRNA + S-adenosyl-L-homocysteine. Functionally, specifically methylates the N7 position of guanine in position 527 of 16S rRNA. This is Ribosomal RNA small subunit methyltransferase G from Leptothrix cholodnii (strain ATCC 51168 / LMG 8142 / SP-6) (Leptothrix discophora (strain SP-6)).